The primary structure comprises 329 residues: Nitrogenase iron-iron protein beta chain (329 aa).

Positions 20, 45, 104, and 143 each coordinate [8Fe-7S] cluster. Residues 213–288 (SADGSLVSHG…EEGDGKPIPQ (76 aa)) form a disordered region. The segment covering 257–271 (RSRRSSARPRSHPQY) has biased composition (basic residues).

It belongs to the NifD/NifK/NifE/NifN family. As to quaternary structure, hexamer of two alpha, two beta, and two delta chains. The cofactor is [8Fe-7S] cluster.

It catalyses the reaction N2 + 8 reduced [2Fe-2S]-[ferredoxin] + 16 ATP + 16 H2O = H2 + 8 oxidized [2Fe-2S]-[ferredoxin] + 2 NH4(+) + 16 ADP + 16 phosphate + 6 H(+). Functionally, this iron-iron protein is part of the nitrogenase complex that catalyzes the key enzymatic reactions in nitrogen fixation. Other nitrogenase complexes utilize a molybdenum-iron protein or a vanadium-iron protein. This is Nitrogenase iron-iron protein beta chain (anfK) from Ruminiclostridium hungatei (Clostridium hungatei).